Reading from the N-terminus, the 421-residue chain is UDP-N-acetylglucosamine 1-carboxyvinyltransferase 2 (421 aa).

22–23 (KN) is a phosphoenolpyruvate binding site. R94 lines the UDP-N-acetyl-alpha-D-glucosamine pocket. The active-site Proton donor is C118. Position 118 is a 2-(S-cysteinyl)pyruvic acid O-phosphothioketal (C118). 2 residues coordinate UDP-N-acetyl-alpha-D-glucosamine: D308 and I330.

Belongs to the EPSP synthase family. MurA subfamily.

Its subcellular location is the cytoplasm. The catalysed reaction is phosphoenolpyruvate + UDP-N-acetyl-alpha-D-glucosamine = UDP-N-acetyl-3-O-(1-carboxyvinyl)-alpha-D-glucosamine + phosphate. The protein operates within cell wall biogenesis; peptidoglycan biosynthesis. In terms of biological role, cell wall formation. Adds enolpyruvyl to UDP-N-acetylglucosamine. The polypeptide is UDP-N-acetylglucosamine 1-carboxyvinyltransferase 2 (Lactococcus lactis subsp. lactis (strain IL1403) (Streptococcus lactis)).